Reading from the N-terminus, the 786-residue chain is Ribosome biogenesis protein BOP1 homolog (786 aa).

A compositionally biased stretch (basic residues) spans 1 to 11 (MAKKSAIKRKV). A disordered region spans residues 1 to 161 (MAKKSAIKRK…NSDTSDEEDI (161 aa)). Polar residues predominate over residues 17–26 (INEQASVSEQ). Composition is skewed to acidic residues over residues 44 to 53 (EDTTDDEGID), 60 to 72 (TSDD…DEEG), and 82 to 114 (SGED…DDAK). Residues 122-135 (KATLSKTTGDSSNI) are compositionally biased toward polar residues. The segment covering 141-150 (PRRDPSKPEY) has biased composition (basic and acidic residues). The segment covering 151 to 160 (ENSDTSDEED) has biased composition (acidic residues). WD repeat units lie at residues 447–488 (GHTD…RTIE), 490–528 (NDVV…KLLV), 572–614 (THFK…SQIP), 617–655 (KSKG…LIKK), 658–697 (TNSK…KPYQ), 701–740 (LHRN…DLLQ), and 756–786 (RDEF…RLYT).

The protein belongs to the WD repeat BOP1/ERB1 family.

The protein localises to the nucleus. The protein resides in the nucleolus. It localises to the nucleoplasm. Required for maturation of ribosomal RNAs and formation of the large ribosomal subunit. This is Ribosome biogenesis protein BOP1 homolog from Drosophila grimshawi (Hawaiian fruit fly).